Consider the following 407-residue polypeptide: Phosphoglycerate kinase (407 aa).

Substrate is bound by residues 21–23 (DLN), R36, 59–62 (HQGR), R116, and R156. Residues E332 and 358 to 361 (GGDT) contribute to the ATP site.

This sequence belongs to the phosphoglycerate kinase family. As to quaternary structure, monomer.

The protein resides in the cytoplasm. The catalysed reaction is (2R)-3-phosphoglycerate + ATP = (2R)-3-phospho-glyceroyl phosphate + ADP. The protein operates within carbohydrate degradation; glycolysis; pyruvate from D-glyceraldehyde 3-phosphate: step 2/5. This is Phosphoglycerate kinase from Halorubrum lacusprofundi (strain ATCC 49239 / DSM 5036 / JCM 8891 / ACAM 34).